Consider the following 874-residue polypeptide: Ectonucleotide pyrophosphatase/phosphodiesterase family member 3 (874 aa).

Residues M1 to E11 lie on the Cytoplasmic side of the membrane. A helical; Signal-anchor for type II membrane protein transmembrane segment spans residues P12–A30. The Extracellular segment spans residues L31–I874. SMB domains follow at residues Q51 to T93 and Q94 to P138. 13 disulfide bridges follow: C54-C58, C54-C71, C58-C89, C69-C71, C69-C82, C75-C81, C82-C89, C98-C115, C103-C133, C113-C126, C119-C125, C144-C190, and C152-C364. Positions R78–D80 match the Cell attachment site motif. The tract at residues P160–T544 is phosphodiesterase. D167 contributes to the Zn(2+) binding site. K204 is an ATP binding site. T205 contributes to the Zn(2+) binding site. T205 (nucleophile) is an active-site residue. N226 contributes to the ATP binding site. N236 is a glycosylation site (N-linked (GlcNAc...) asparagine). Residue D275 participates in ATP binding. 2 N-linked (GlcNAc...) asparagine glycosylation sites follow: N279 and N288. Residue Y289 coordinates ATP. Residues D325, H329, D372, and H373 each contribute to the Zn(2+) site. 6 disulfide bridges follow: C380/C477, C428/C817, C561/C623, C574/C679, C576/C664, and C786/C796. N-linked (GlcNAc...) asparagine glycosylation occurs at N425. H482 serves as a coordination point for Zn(2+). N-linked (GlcNAc...) asparagine glycans are attached at residues N532, N594, N687, and N701. Positions N581–I874 are nuclease. Residues D751, N753, D755, H757, and D759 each coordinate Ca(2+). The N-linked (GlcNAc...) asparagine glycan is linked to N820.

Monomer and homodimer. Zn(2+) serves as cofactor. Post-translationally, N-glycosylated. N-glycosylation is necessary for normal transport to the cell membrane, but is not the apical targeting signal. In terms of tissue distribution, detected at the tip of villi in the small intestine. Detected on basophils and mast cells (at protein level). Detected in the epithelial layer of the small intestine; expression is higher in the proximal part and lower in the distal part of the small intestine.

It is found in the cell membrane. The protein resides in the apical cell membrane. The protein localises to the secreted. It catalyses the reaction a ribonucleoside 5'-triphosphate + H2O = a ribonucleoside 5'-phosphate + diphosphate + H(+). It carries out the reaction UDP-N-acetyl-alpha-D-glucosamine + H2O = N-acetyl-alpha-D-glucosamine 1-phosphate + UMP + 2 H(+). The enzyme catalyses ATP + H2O = AMP + diphosphate + H(+). The catalysed reaction is CTP + H2O = CMP + diphosphate + H(+). It catalyses the reaction GTP + H2O = GMP + diphosphate + H(+). It carries out the reaction UTP + H2O = UMP + diphosphate + H(+). The enzyme catalyses Hydrolytically removes 5'-nucleotides successively from the 3'-hydroxy termini of 3'-hydroxy-terminated oligonucleotides.. The catalysed reaction is P(1),P(3)-bis(5'-adenosyl) triphosphate + H2O = AMP + ADP + 2 H(+). It catalyses the reaction P(1),P(4)-bis(5'-adenosyl) tetraphosphate + H2O = AMP + ATP + 2 H(+). It carries out the reaction P(1),P(5)-bis(5'-adenosyl) pentaphosphate + H2O = adenosine 5'-tetraphosphate + AMP + 2 H(+). The enzyme catalyses P(1),P(4)-bis(5'-guanosyl) tetraphosphate + H2O = GMP + GTP + 2 H(+). Functionally, hydrolase that metabolizes extracellular nucleotides, including ATP, GTP, UTP and CTP. Limits mast cells and basophils response during inflammation and during the chronic phases of allergic responses by eliminating extracellular ATP, a signaling molecule activating these cells in an autocrine manner. Metabolizes extracellular ATP in the lumen of the small intestine, and thereby prevents ATP-induced apoptosis of intestinal plasmacytoid dendritic cells. Has a broad specificity and can also hydrolyze UDP-GlcNAc into UMP and GlcNAc-1-phosphate and potentially several other intracellular nucleotide sugars, including UDP-GalNAc, CMP-NeuAc, GDP-Fuc, and UDP-GlcA. Thereby, could modulate glycan biosynthesis and protein glycosylation. Can hydrolyze extracellular dinucleoside polyphosphates, including the vasoactive adenosine polyphosphates as well. In addition, displays an alkaline phosphodiesterase activity in vitro. The protein is Ectonucleotide pyrophosphatase/phosphodiesterase family member 3 of Mus musculus (Mouse).